The sequence spans 381 residues: UDP-N-acetylglucosamine--N-acetylmuramyl-(pentapeptide) pyrophosphoryl-undecaprenol N-acetylglucosamine transferase (381 aa).

UDP-N-acetyl-alpha-D-glucosamine-binding positions include 10–12, Asn124, Arg165, Ser207, Ile263, and Gln308; that span reads TGG.

Belongs to the glycosyltransferase 28 family. MurG subfamily.

The protein localises to the cell inner membrane. It catalyses the reaction di-trans,octa-cis-undecaprenyl diphospho-N-acetyl-alpha-D-muramoyl-L-alanyl-D-glutamyl-meso-2,6-diaminopimeloyl-D-alanyl-D-alanine + UDP-N-acetyl-alpha-D-glucosamine = di-trans,octa-cis-undecaprenyl diphospho-[N-acetyl-alpha-D-glucosaminyl-(1-&gt;4)]-N-acetyl-alpha-D-muramoyl-L-alanyl-D-glutamyl-meso-2,6-diaminopimeloyl-D-alanyl-D-alanine + UDP + H(+). It participates in cell wall biogenesis; peptidoglycan biosynthesis. Its function is as follows. Cell wall formation. Catalyzes the transfer of a GlcNAc subunit on undecaprenyl-pyrophosphoryl-MurNAc-pentapeptide (lipid intermediate I) to form undecaprenyl-pyrophosphoryl-MurNAc-(pentapeptide)GlcNAc (lipid intermediate II). The protein is UDP-N-acetylglucosamine--N-acetylmuramyl-(pentapeptide) pyrophosphoryl-undecaprenol N-acetylglucosamine transferase of Trichlorobacter lovleyi (strain ATCC BAA-1151 / DSM 17278 / SZ) (Geobacter lovleyi).